Here is a 467-residue protein sequence, read N- to C-terminus: Glutamate--tRNA ligase 1 (467 aa).

The 'HIGH' region motif lies at 8–18 (PSPTGHLHVGG). The 'KMSKS' region motif lies at 230 to 234 (PLSKR). Lys233 lines the ATP pocket.

This sequence belongs to the class-I aminoacyl-tRNA synthetase family. Glutamate--tRNA ligase type 1 subfamily. Monomer.

Its subcellular location is the cytoplasm. It catalyses the reaction tRNA(Glu) + L-glutamate + ATP = L-glutamyl-tRNA(Glu) + AMP + diphosphate. Catalyzes the attachment of glutamate to tRNA(Glu) in a two-step reaction: glutamate is first activated by ATP to form Glu-AMP and then transferred to the acceptor end of tRNA(Glu). The sequence is that of Glutamate--tRNA ligase 1 from Petrotoga mobilis (strain DSM 10674 / SJ95).